The sequence spans 205 residues: Large ribosomal subunit protein bL25 (205 aa).

This sequence belongs to the bacterial ribosomal protein bL25 family. CTC subfamily. Part of the 50S ribosomal subunit; part of the 5S rRNA/L5/L18/L25 subcomplex. Contacts the 5S rRNA. Binds to the 5S rRNA independently of L5 and L18.

This is one of the proteins that binds to the 5S RNA in the ribosome where it forms part of the central protuberance. The polypeptide is Large ribosomal subunit protein bL25 (Bartonella bacilliformis (strain ATCC 35685 / KC583 / Herrer 020/F12,63)).